Consider the following 302-residue polypeptide: Protoheme IX farnesyltransferase (302 aa).

A run of 9 helical transmembrane segments spans residues 28-48 (VVALMILTSVIGMLLAAPGVP), 50-70 (WSVLLFGNLGIALLAGAAAVV), 95-115 (IAPLDALLFATVLAALGMVVL), 122-142 (LTAWLTLASLVGYAGVYTLFL), 150-170 (IVIGGLAGAMPPLLGWTAVTG), 176-196 (ALLLVLIIFAWTPPHFWALAI), 221-241 (LHILLYTLMLLAVSLLPFVTG), 243-263 (SGGIYLVGALALGLRFLQYAV), and 282-302 (ITYLMALFVVLLVDHFVFVPA).

Belongs to the UbiA prenyltransferase family. Protoheme IX farnesyltransferase subfamily.

It localises to the cell inner membrane. It catalyses the reaction heme b + (2E,6E)-farnesyl diphosphate + H2O = Fe(II)-heme o + diphosphate. It participates in porphyrin-containing compound metabolism; heme O biosynthesis; heme O from protoheme: step 1/1. Converts heme B (protoheme IX) to heme O by substitution of the vinyl group on carbon 2 of heme B porphyrin ring with a hydroxyethyl farnesyl side group. This Marinobacter nauticus (strain ATCC 700491 / DSM 11845 / VT8) (Marinobacter aquaeolei) protein is Protoheme IX farnesyltransferase.